Here is a 200-residue protein sequence, read N- to C-terminus: Coiled-coil domain-containing protein 28B (200 aa).

At Met1 the chain carries N-acetylmethionine. Residues 1-10 are compositionally biased toward basic residues; sequence MDDKKKKRSP. The interval 1–49 is disordered; sequence MDDKKKKRSPKPCLAQPAQAPGTLRRVPVPTSHSGSLALGLPHLPSPKQ. A phosphoserine mark is found at Ser46 and Ser115. Residues 141 to 152 are compositionally biased toward acidic residues; that stretch reads EEEDDEEEEDGV. The segment at 141 to 164 is disordered; the sequence is EEEDDEEEEDGVTEGLPEEQKKTM. Positions 158 to 183 form a coiled coil; it reads EEQKKTMADRNLDQLLSNLEDLSNSI.

As to quaternary structure, interacts with BBS1, BBS2, BBS4, BBS5, BBS6, BBS7 and TTC8/BBS8. Interacts with MAPKAP1/SIN1 isoform 1 and RICTOR.

The protein resides in the cytoplasm. Its subcellular location is the cytoskeleton. It is found in the microtubule organizing center. It localises to the centrosome. In terms of biological role, involved in ciliogenesis. Regulates cilia length through its interaction with MAPKAP1/SIN1 but independently of mTORC2 complex. Modulates mTORC2 complex assembly and function, possibly enhances AKT1 phosphorylation. Does not seem to modulate assembly and function of mTORC1 complex. The sequence is that of Coiled-coil domain-containing protein 28B (CCDC28B) from Homo sapiens (Human).